A 176-amino-acid chain; its full sequence is Protein MAL2 (176 aa).

At Met1–Thr34 the chain is on the cytoplasmic side. Residues Ile31–Arg175 enclose the MARVEL domain. Residues Tyr35 to Ala55 form a helical membrane-spanning segment. Topologically, residues Ser56 to Gly66 are lumenal. Residues Trp67–Leu87 form a helical membrane-spanning segment. Over Ser88 to Asp102 the chain is Cytoplasmic. The chain crosses the membrane as a helical span at residues Phe103–Thr123. At Thr124–Asn149 the chain is on the lumenal side. Asn132 carries N-linked (GlcNAc...) asparagine glycosylation. A helical membrane pass occupies residues Val150 to Ala170. Over Leu171 to Pro176 the chain is Cytoplasmic.

This sequence belongs to the MAL family. As to quaternary structure, interacts with TPD52L2.

The protein localises to the cell membrane. The protein resides in the apical cell membrane. In terms of biological role, member of the machinery of polarized transport. Required for the indirect transcytotic route at the step of the egress of the transcytosing cargo from perinuclear endosomes in order for it to travel to the apical surface via a raft-dependent pathway. The protein is Protein MAL2 (MAL2) of Bos taurus (Bovine).